The following is a 327-amino-acid chain: Malate dehydrogenase (327 aa).

12–18 (GAAGQIA) contacts NAD(+). Substrate is bound by residues Arg93 and Arg99. Residues Asn106, Gln113, and 130 to 132 (VGN) each bind NAD(+). 2 residues coordinate substrate: Asn132 and Arg163. His188 functions as the Proton acceptor in the catalytic mechanism.

Belongs to the LDH/MDH superfamily. MDH type 2 family.

It catalyses the reaction (S)-malate + NAD(+) = oxaloacetate + NADH + H(+). Its function is as follows. Catalyzes the reversible oxidation of malate to oxaloacetate. This is Malate dehydrogenase from Burkholderia mallei (strain NCTC 10247).